Consider the following 66-residue polypeptide: Antimicrobial peptide Eval967 (66 aa).

An N-terminal signal peptide occupies residues 1–22 (MKFSALLPVFFLLLAVIDYCQA). A Leucine amide modification is found at Leu36. Residues 37–66 (GKRDVKTQKYVDIKRRDLDLDDMLSKLFED) constitute a propeptide that is removed on maturation.

The protein belongs to the non-disulfide-bridged peptide (NDBP) superfamily. Short antimicrobial peptide (group 4) family. As to expression, expressed by the venom gland.

It localises to the secreted. Probable antimicrobial peptide. Has no inhibitory activity against herpes simplex virus type 1 (HSV-1). This Euscorpiops validus (Scorpion) protein is Antimicrobial peptide Eval967.